A 124-amino-acid polypeptide reads, in one-letter code: Small ribosomal subunit protein uS12 (124 aa).

Asp89 bears the 3-methylthioaspartic acid mark.

It belongs to the universal ribosomal protein uS12 family. Part of the 30S ribosomal subunit. Contacts proteins S8 and S17. May interact with IF1 in the 30S initiation complex.

In terms of biological role, with S4 and S5 plays an important role in translational accuracy. Functionally, interacts with and stabilizes bases of the 16S rRNA that are involved in tRNA selection in the A site and with the mRNA backbone. Located at the interface of the 30S and 50S subunits, it traverses the body of the 30S subunit contacting proteins on the other side and probably holding the rRNA structure together. The combined cluster of proteins S8, S12 and S17 appears to hold together the shoulder and platform of the 30S subunit. The protein is Small ribosomal subunit protein uS12 of Shewanella piezotolerans (strain WP3 / JCM 13877).